Consider the following 500-residue polypeptide: NAD(P)H-quinone oxidoreductase chain 4, chloroplastic (500 aa).

The next 14 membrane-spanning stretches (helical) occupy residues 4-24, 37-57, 87-107, 113-130, 134-154, 167-187, 211-231, 242-262, 272-292, 313-333, 334-354, 386-406, 417-437, and 462-482; these read FPWL…IFFL, ISIC…HFQL, VGSI…AWPV, LFYF…GLFS, LLLF…LLSM, FILY…GMGL, ILLY…IPLH, HYST…YGLI, AHYL…IYAA, MGFI…GAIL, QILS…TASD, LALP…GLIT, LITF…LSML, and LFIL…PDLV.

The protein belongs to the complex I subunit 4 family.

It localises to the plastid. The protein resides in the chloroplast thylakoid membrane. It carries out the reaction a plastoquinone + NADH + (n+1) H(+)(in) = a plastoquinol + NAD(+) + n H(+)(out). It catalyses the reaction a plastoquinone + NADPH + (n+1) H(+)(in) = a plastoquinol + NADP(+) + n H(+)(out). The polypeptide is NAD(P)H-quinone oxidoreductase chain 4, chloroplastic (Agrostis stolonifera (Creeping bentgrass)).